A 119-amino-acid chain; its full sequence is MFRSVALAVLALLFLSGLEAIQRAPKIQVYSRHPPENGKSNFLNCYVSGFHPSDIEVDLLKNGEKMGKVEHSDLSFSKDWSFYLLYYTEFTPNEKDEYACRVNHVTLSGPRTVKWDRDM.

Positions 1–20 (MFRSVALAVLALLFLSGLEA) are cleaved as a signal peptide. The region spanning 25–114 (PKIQVYSRHP…VTLSGPRTVK (90 aa)) is the Ig-like C1-type domain. A disulfide bond links cysteine 45 and cysteine 100.

It belongs to the beta-2-microglobulin family. In terms of assembly, heterodimer of an alpha chain and a beta chain. Beta-2-microglobulin is the beta-chain of major histocompatibility complex class I molecules.

It localises to the secreted. Its function is as follows. Component of the class I major histocompatibility complex (MHC). Involved in the presentation of peptide antigens to the immune system. In Chlorocebus aethiops (Green monkey), this protein is Beta-2-microglobulin (B2M).